The sequence spans 1521 residues: MAVISGSDSVLLSNGSISTSTSNPSPLSPSDGDLPAQHLGPRETPRTKASPNGCLQLNGTVKSSFLPLDNQRTPQTPTQCCHPCPYHHPVSSHSNHQECHPEAGLAASPALASCRMQPHSEYSASLCPNHSPVYQAAHCLQPSPSFCLHHPWPDHFQHQPVRQHLTIIRPSRPFKFPRSYAALLADWPVVVLGMCTLLIVVCALVGVLVPELPDFSDPLLGFEPRGTTIGQRLVTWNNMMRNTGYKATLANYPYKYAEEQARSHRDDRWSDDHHERERREVDWNFQKDSFFCDVPSDGYSRVVFASAGGETLWNLPAIKSMCDVDNSRIRSHPQFSDLCQRTTAVSCCPSWTLGNYIAILNNRSSCQKIVERDVSHTLKLLRTCAKHYQNGTLGPDCWDKAARRKDQLKCTNVPRKCTKYNAVYQILHYLVDKDFMTPKTADYAVPALKYSMLFSPTEKGESMMNIYLDNFENWNSSDGITTVTGIEFGIKHSLFQDYLLMDTVYPAIAIAIVLLIMCVYTKSMFITLMTMFAIISSLIVSYFLYRVVFNFEFFPFMNLTALIILVGIGADDAFVLCDVWNYTKFDKPRAETSEAVSVTLQHAALSMFVTSFTTAAAFYANYVSNITAIRCFGVYAGTAILVNYVLMVTWLPAVIVLHERYLLNIFTCFRKPQPQAYDKSCWAVLCQKCRRVLFAVSEASRIFFEKVLPCIVIKFRYLWLIWFLALTVGGAYIVCVNPKMKLPSLELSEFQVFRSSHPFERYDAEFKKLFMFERVHHGEELHMPITVIWGVSPEDSGDPLNPKSKGELTLDSTFNIASPASQAWILHFCQKLRNQTFFHQTEQQDFTSCFIETFKQWMENQDCDEPALYPCCSHCSFPYKQEVFELCIKKAIMELDRSTGYHLNNKTPGPRFDINDTIRAVVLEFQSTFLFTLAYEKMQQFYKEVDSWISHELSSAPEGLSRGWFVSNLEFYDLQDSLSDGTLIAMGLSVAVAFSVMLLTTWNIIISLYAIVSIAGTIFVTVGSLVLLGWELNVLESVTISVAVGLSVDFAVHYGVAYRLAPDPDREGKVIFSLSRMGSAIAMAALTTFVAGAMMMPSTVLAYTQLGTFMMLVMCVSWAFATFFFQCLCRCLGPQGTCGQIPFPTKLQCSPFSHTLSARPGDRGPSKTHAASAYSVDARGQKSQLEHEFYELQPLASHSCTSSEKTTYEEPHTCSEFFNGQAKNLRMPVPAAYSSELTKSPSSEPGSALLQSCLEQDTVCHFSLNPRCNCRDAYTHLQYGLPEIHCQQMGDSLCHKCASTAGGFVQIQSSVAPLKASHQAAEGLLHPAQHMLPPGMQNSRPRNFFLHSVQHFQAQENLGRTSTHSTDERLPRTAELSPPPSDSRSTESFQRACCHPENNQRRLCKSRDPGDTEGSGGTKSKVSGLPNQTDKEEKQVEPSLLQTDETVNSEHLNHNESNFTFSHLPGEAGCRSCPNSPQSCRSIMRSKCGTEDCQTPNLEANVPAVPTHSDLSGESLLIKTL.

Positions 1-10 (MAVISGSDSV) are enriched in polar residues. The disordered stretch occupies residues 1 to 55 (MAVISGSDSVLLSNGSISTSTSNPSPLSPSDGDLPAQHLGPRETPRTKASPNGCL). Over residues 11–35 (LLSNGSISTSTSNPSPLSPSDGDLP) the composition is skewed to low complexity. Asn14 and Asn58 each carry an N-linked (GlcNAc...) asparagine glycan. The chain crosses the membrane as a helical span at residues 189–209 (VVVLGMCTLLIVVCALVGVLV). Asn390 carries N-linked (GlcNAc...) asparagine glycosylation. Residues 485 to 657 (GIEFGIKHSL…VTWLPAVIVL (173 aa)) enclose the SSD domain. The next 3 membrane-spanning stretches (helical) occupy residues 499–519 (LLMD…IMCV), 524–544 (MFIT…SYFL), and 548–568 (VFNF…LVGI). Asn581 carries N-linked (GlcNAc...) asparagine glycosylation. The next 8 membrane-spanning stretches (helical) occupy residues 603–623 (AALS…ANYV), 637–657 (GTAI…VIVL), 717–737 (YLWL…VCVN), 986–1006 (MGLS…NIII), 1008–1028 (LYAI…LVLL), 1038–1058 (VTIS…GVAY), 1081–1101 (IAMA…STVL), and 1109–1129 (FMML…QCLC). Composition is skewed to polar residues over residues 1355–1364 (QENLGRTSTH) and 1418–1428 (TKSKVSGLPNQ). The tract at residues 1355–1440 (QENLGRTSTH…KEEKQVEPSL (86 aa)) is disordered. Asn1455 is a glycosylation site (N-linked (GlcNAc...) asparagine).

Belongs to the dispatched family. In terms of assembly, interacts with SHH; via the cholesterol anchor of the dually lipid-modified SHH (ShhNp).

Its subcellular location is the membrane. Functionally, functions in hedgehog (Hh) signaling. Regulates the release and extracellular accumulation of cholesterol-modified hedgehog proteins and is hence required for effective production of the Hh signal. Synergizes with SCUBE2 to cause an increase in SHH secretion. The sequence is that of Protein dispatched homolog 1 (Disp1) from Mus musculus (Mouse).